The chain runs to 270 residues: Protein-ADP-ribose hydrolase (270 aa).

In terms of domain architecture, Macro spans 73 to 267 (VSVKDCQKTN…LYDTYLQKEN (195 aa)). ADP-D-ribose-binding residues include aspartate 92, isoleucine 93, and asparagine 106. Positions 112, 117, and 119 each coordinate Zn(2+). ADP-D-ribose contacts are provided by cysteine 119, isoleucine 120, aspartate 121, serine 212, threonine 213, glycine 214, glutamate 215, and phenylalanine 216.

It belongs to the MacroD-type family. Zn-Macro subfamily. In terms of assembly, monomer. Interacts with the lipoylated form of GcvH-L. Zn(2+) serves as cofactor.

The enzyme catalyses 4-O-(ADP-D-ribosyl)-L-aspartyl-[protein] + H2O = L-aspartyl-[protein] + ADP-D-ribose + H(+). It carries out the reaction 5-O-(ADP-D-ribosyl)-L-glutamyl-[protein] + H2O = L-glutamyl-[protein] + ADP-D-ribose + H(+). It catalyses the reaction S-(ADP-D-ribosyl)-L-cysteinyl-[protein] + H2O = ADP-D-ribose + L-cysteinyl-[protein]. Its function is as follows. ADP-ribosylhydrolase that specifically reverses the SirTM-mediated mono-ADP-ribosylation at an asparatate residue of GcvH-L (SpyM50867), by releasing ADP-ribose from the target protein. May play a role in the regulation of the response to host-induced oxidative stress. It can also hydrolyze ADP-ribosyl-glutamate bonds and ADP-ribosyl-cysteine bonds. In vitro, it can remove the ADP-ribosyl modification from the human mono-ADP-ribosylated PARP1 E988Q mutant, which is primarily modified on glutamate site with only minor aspartate contribution. It can also hydrolyze the ADP-ribosyl-cysteinyl glycosidic bond of a Cys-ADP-ribosylated synthetic peptide. This is Protein-ADP-ribose hydrolase from Streptococcus pyogenes serotype M5 (strain Manfredo).